We begin with the raw amino-acid sequence, 253 residues long: TCF3 fusion partner (253 aa).

Disordered regions lie at residues 49–72 (SGGLGGSGLRERDEEEEAARGRRR) and 142–211 (DEGS…PELA). Ser-167 is modified (phosphoserine). Positions 170-181 (RRTPAPPEPGSP) are enriched in pro residues. Thr-172 carries the post-translational modification Phosphothreonine. Phosphoserine is present on residues Ser-180 and Ser-188. At Thr-207 the chain carries Phosphothreonine. Residue Lys-216 forms a Glycyl lysine isopeptide (Lys-Gly) (interchain with G-Cter in SUMO2) linkage. The interval 234–253 (VSRGPDKLLPYPTLASPASD) is disordered. Phosphoserine occurs at positions 249 and 252.

As to quaternary structure, interacts with NOL3; translocates NOL3 into the nucleus and negatively regulated TFPT-induced cell death. Component of the chromatin remodeling INO80 complex; specifically part of a complex module associated with the N-terminus of INO80.

The protein localises to the nucleus. Appears to promote apoptosis in a p53/TP53-independent manner. Functionally, putative regulatory component of the chromatin remodeling INO80 complex which is involved in transcriptional regulation, DNA replication and probably DNA repair. In Homo sapiens (Human), this protein is TCF3 fusion partner (TFPT).